We begin with the raw amino-acid sequence, 526 residues long: GMP synthase [glutamine-hydrolyzing] (526 aa).

The 199-residue stretch at lysine 4–serine 202 folds into the Glutamine amidotransferase type-1 domain. Cysteine 81 acts as the Nucleophile in catalysis. Active-site residues include histidine 176 and glutamate 178. Residues tryptophan 203 to arginine 395 form the GMPS ATP-PPase domain. ATP is bound at residue serine 230–serine 236.

Homodimer.

The catalysed reaction is XMP + L-glutamine + ATP + H2O = GMP + L-glutamate + AMP + diphosphate + 2 H(+). It participates in purine metabolism; GMP biosynthesis; GMP from XMP (L-Gln route): step 1/1. Catalyzes the synthesis of GMP from XMP. The chain is GMP synthase [glutamine-hydrolyzing] from Methylobacillus flagellatus (strain ATCC 51484 / DSM 6875 / VKM B-1610 / KT).